Reading from the N-terminus, the 860-residue chain is Ubiquitin carboxyl-terminal hydrolase 13 (860 aa).

The segment at 168-276 (QVSRHARSLR…EHLLHFGIDM (109 aa)) adopts a UBP-type; degenerate zinc-finger fold. Zn(2+) is bound by residues C192, C195, C212, and H225. Residues 318–857 (TGIKNLGNSC…LGYMYFYRRL (540 aa)) form the USP domain. Catalysis depends on C327, which acts as the Nucleophile. A disordered region spans residues 611–636 (DLTPPIVIPEDTRDSSTNNSLESPEI). 2 consecutive UBA domains span residues 635–676 (EIDE…IIAH) and 710–750 (QPPE…IFTH). A compositionally biased stretch (acidic residues) spans 755-768 (DESEAMSDTADTEP). The segment at 755 to 795 (DESEAMSDTADTEPNDNSFSNANAHTDSSLSPDQDLSSPRV) is disordered. Residues 769–780 (NDNSFSNANAHT) show a composition bias toward polar residues. Residues 781-793 (DSSLSPDQDLSSP) are compositionally biased toward low complexity. H819 (proton acceptor) is an active-site residue.

It belongs to the peptidase C19 family.

The catalysed reaction is Thiol-dependent hydrolysis of ester, thioester, amide, peptide and isopeptide bonds formed by the C-terminal Gly of ubiquitin (a 76-residue protein attached to proteins as an intracellular targeting signal).. Its activity is regulated as follows. Specifically inhibited by spautin-1 (specific and potent autophagy inhibitor-1), a derivative of MBCQ that binds to usp13 and inhibits deubiquitinase activity. In terms of biological role, deubiquitinase that mediates deubiquitination of target proteins and is involved in various processes such as autophagy and endoplasmic reticulum-associated degradation (ERAD). The chain is Ubiquitin carboxyl-terminal hydrolase 13 (usp13) from Danio rerio (Zebrafish).